The sequence spans 145 residues: Ribonuclease H (145 aa).

The 142-residue stretch at 1–142 (MKEVVIYTDG…CDEIARSMIK (142 aa)) folds into the RNase H type-1 domain. The Mg(2+) site is built by Asp-9, Glu-47, Asp-69, and Asp-134.

It belongs to the RNase H family. Monomer. It depends on Mg(2+) as a cofactor.

It localises to the cytoplasm. The enzyme catalyses Endonucleolytic cleavage to 5'-phosphomonoester.. Its function is as follows. Endonuclease that specifically degrades the RNA of RNA-DNA hybrids. This Caldicellulosiruptor saccharolyticus (strain ATCC 43494 / DSM 8903 / Tp8T 6331) protein is Ribonuclease H.